Consider the following 121-residue polypeptide: Basic phospholipase A2 F17 (121 aa).

Disulfide bonds link C25-C114, C27-C43, C42-C94, C48-C121, C49-C87, C56-C80, and C74-C85. Residues Y26, G28, and G30 each contribute to the Ca(2+) site. Residue H46 is part of the active site. D47 provides a ligand contact to Ca(2+). Residue D88 is part of the active site.

The protein belongs to the phospholipase A2 family. Group II subfamily. D49 sub-subfamily. In terms of assembly, when this protein is associated with crotapotin (F5 or F7), it forms the crotoxin protein. Ca(2+) is required as a cofactor. In terms of tissue distribution, expressed by the venom gland.

Its subcellular location is the secreted. It carries out the reaction a 1,2-diacyl-sn-glycero-3-phosphocholine + H2O = a 1-acyl-sn-glycero-3-phosphocholine + a fatty acid + H(+). Activated by heparin. Inhibited by its chaperone crotapotin. In terms of biological role, snake venom phospholipase A2 (PLA2) that has anticoagulant activity and inhibits bactericial growth of the Gram-negative bacteria Xanthomonas axonopodis pv. passiflorae (in monomeric form). PLA2 catalyzes the calcium-dependent hydrolysis of the 2-acyl groups in 3-sn-phosphoglycerides. This chain is Basic phospholipase A2 F17, found in Crotalus durissus terrificus (South American rattlesnake).